Consider the following 1925-residue polypeptide: Diacylglycerol kinase eta (1925 aa).

Positions 82 to 175 (AIIREGYLMK…WLGSLKTATA (94 aa)) constitute a PH domain. Phorbol-ester/DAG-type zinc fingers lie at residues 195 to 245 (HHHW…IANC) and 268 to 319 (PHQW…PIVC). The region spanning 350–486 (GNFSPLLVFV…DRWSIMVFEK (137 aa)) is the DAGKc domain. 8 disordered regions span residues 620–641 (EKDNINSKERRNSRSLRSSEKE), 783–805 (ANIDDAGNRLSPSSEAGENTPTE), 847–872 (DKERTASGQVESEKEEADVNEKSEPQ), 1013–1065 (TTLC…NPQQ), 1113–1141 (DRNSGDNHNDNGKNEEADTPTNSAPTRTY), 1167–1234 (NTTT…SSAS), 1256–1276 (IRRHSSHAPSLAVRDYDKDKD), and 1385–1405 (FSAGDKDEKPGKDKERTPTEE). Polar residues predominate over residues 792-802 (LSPSSEAGENT). A compositionally biased stretch (basic and acidic residues) spans 863 to 872 (ADVNEKSEPQ). A compositionally biased stretch (basic and acidic residues) spans 1115-1128 (NSGDNHNDNGKNEE). The span at 1167 to 1187 (NTTTSTSSSISTTTTTSTTST) shows a compositional bias: low complexity. The segment covering 1386–1405 (SAGDKDEKPGKDKERTPTEE) has biased composition (basic and acidic residues). Residues 1862 to 1925 (WSVNEVVTWL…LQAIKDLSEN (64 aa)) enclose the SAM domain.

The protein belongs to the eukaryotic diacylglycerol kinase family.

The protein localises to the cytoplasm. The enzyme catalyses a 1,2-diacyl-sn-glycerol + ATP = a 1,2-diacyl-sn-glycero-3-phosphate + ADP + H(+). Its function is as follows. Phosphorylates diacylglycerol (DAG) to generate phosphatidic acid (PA). In Drosophila mojavensis (Fruit fly), this protein is Diacylglycerol kinase eta.